The chain runs to 134 residues: Thionin-2.2 (134 aa).

The first 24 residues, 1–24 (MEGKTVISSLLIMSLVLAQIQVEA), serve as a signal peptide directing secretion. 3 disulfide bridges follow: C27–C64, C28–C56, and C40–C50. Residues 71-134 (DILENSGDAV…GGSTAAVKSA (64 aa)) constitute a propeptide, acidic domain.

The protein belongs to the plant thionin (TC 1.C.44) family. Low basal expression in seedlings. Also detected in rosette leaves.

It localises to the secreted. In terms of biological role, thionins are small plant proteins which are toxic to animal cells. They seem to exert their toxic effect at the level of the cell membrane. Their precise function is not known. The polypeptide is Thionin-2.2 (THI2.2) (Arabidopsis thaliana (Mouse-ear cress)).